Reading from the N-terminus, the 150-residue chain is Probable histone H2A.5 (150 aa).

Positions 1–12 (MESSQATTKPTR) are enriched in low complexity. 2 disordered regions span residues 1 to 28 (MESS…SVSK) and 130 to 150 (KSTA…PKKA). Over residues 131–150 (STASSSQAEKASATKSPKKA) the composition is skewed to polar residues. Serine 146 carries the post-translational modification Phosphoserine. The short motif at 146 to 149 (SPKK) is the SPKK motif element.

Belongs to the histone H2A family. As to quaternary structure, the nucleosome is a histone octamer containing two molecules each of H2A, H2B, H3 and H4 assembled in one H3-H4 heterotetramer and two H2A-H2B heterodimers. The octamer wraps approximately 147 bp of DNA. In terms of processing, not ubiquitinated.

It localises to the nucleus. It is found in the chromosome. In terms of biological role, core component of nucleosome. Nucleosomes wrap and compact DNA into chromatin, limiting DNA accessibility to the cellular machineries which require DNA as a template. Histones thereby play a central role in transcription regulation, DNA repair, DNA replication and chromosomal stability. DNA accessibility is regulated via a complex set of post-translational modifications of histones, also called histone code, and nucleosome remodeling. The chain is Probable histone H2A.5 from Arabidopsis thaliana (Mouse-ear cress).